We begin with the raw amino-acid sequence, 545 residues long: CTP synthase (545 aa).

Residues 1 to 266 (MTTRYIFVTG…DELVVKRFGI (266 aa)) form an amidoligase domain region. Ser14 contributes to the CTP binding site. A UTP-binding site is contributed by Ser14. ATP-binding positions include 15-20 (SLGKGI) and Asp72. Mg(2+)-binding residues include Asp72 and Glu140. CTP-binding positions include 147–149 (DIE), 187–192 (KTKPTQ), and Lys223. UTP-binding positions include 187 to 192 (KTKPTQ) and Lys223. ATP is bound at residue 239 to 241 (KDV). In terms of domain architecture, Glutamine amidotransferase type-1 spans 291–542 (TIGMVGKYIE…VAAATAYQKR (252 aa)). Residue Gly352 participates in L-glutamine binding. Residue Cys379 is the Nucleophile; for glutamine hydrolysis of the active site. L-glutamine-binding positions include 380–383 (LGLQ), Glu403, and Arg470. Active-site residues include His515 and Glu517.

This sequence belongs to the CTP synthase family. In terms of assembly, homotetramer.

The enzyme catalyses UTP + L-glutamine + ATP + H2O = CTP + L-glutamate + ADP + phosphate + 2 H(+). It catalyses the reaction L-glutamine + H2O = L-glutamate + NH4(+). The catalysed reaction is UTP + NH4(+) + ATP = CTP + ADP + phosphate + 2 H(+). It participates in pyrimidine metabolism; CTP biosynthesis via de novo pathway; CTP from UDP: step 2/2. Its activity is regulated as follows. Allosterically activated by GTP, when glutamine is the substrate; GTP has no effect on the reaction when ammonia is the substrate. The allosteric effector GTP functions by stabilizing the protein conformation that binds the tetrahedral intermediate(s) formed during glutamine hydrolysis. Inhibited by the product CTP, via allosteric rather than competitive inhibition. Catalyzes the ATP-dependent amination of UTP to CTP with either L-glutamine or ammonia as the source of nitrogen. Regulates intracellular CTP levels through interactions with the four ribonucleotide triphosphates. This Shewanella sediminis (strain HAW-EB3) protein is CTP synthase.